We begin with the raw amino-acid sequence, 376 residues long: Homeobox protein extradenticle (376 aa).

The tract at residues 1–37 (MEDPNRMLAHTGGMMAPQGYGLSGQDDGQNAGSENEV) is disordered. Positions 38–237 (RKQKDIGEIL…VMILRSRFLD (200 aa)) constitute a PBC domain. The segment at 45 to 124 (EILQQIMSIS…EGVAGPEKGG (80 aa)) is PBC-A. The interval 127–237 (AAAASAAAAS…VMILRSRFLD (111 aa)) is PBC-B. Residues 238–300 (ARRKRRNFSK…NKRIRYKKNI (63 aa)) constitute a DNA-binding region (homeobox; TALE-type). The segment covering 318–335 (ASPYSMAGPPSGTTTPMM) has biased composition (low complexity). The segment at 318-376 (ASPYSMAGPPSGTTTPMMSPAPPQDSMGYPMGSGGYDQQQPYDNSMGGYDPNLHQDLSP) is disordered.

The protein belongs to the TALE/PBX homeobox family. As to quaternary structure, interacts with Ubx and hth. In terms of tissue distribution, prior to full germband retraction it is ubiquitously present, after germband retraction, mostly present in the anterior portion of the ventral nerve cord.

It is found in the nucleus. Its function is as follows. Transcription factor which acts with the selector homeodomain proteins altering the regulation of downstream target genes such as wingless (wg), teashirt (tsh) and decapentaplegic (dpp), thus affecting segmental identity. Delimits the eye field and prevent inappropriate eye development. Required for proper localization of chordotonal organs within the peripheral nervous system. The sequence is that of Homeobox protein extradenticle (exd) from Drosophila melanogaster (Fruit fly).